Here is a 475-residue protein sequence, read N- to C-terminus: 3-isopropylmalate dehydratase large subunit (475 aa).

Residues C352, C413, and C416 each contribute to the [4Fe-4S] cluster site.

Belongs to the aconitase/IPM isomerase family. LeuC type 1 subfamily. As to quaternary structure, heterodimer of LeuC and LeuD. Requires [4Fe-4S] cluster as cofactor.

The enzyme catalyses (2R,3S)-3-isopropylmalate = (2S)-2-isopropylmalate. It functions in the pathway amino-acid biosynthesis; L-leucine biosynthesis; L-leucine from 3-methyl-2-oxobutanoate: step 2/4. Catalyzes the isomerization between 2-isopropylmalate and 3-isopropylmalate, via the formation of 2-isopropylmaleate. The chain is 3-isopropylmalate dehydratase large subunit from Pseudomonas syringae pv. tomato (strain ATCC BAA-871 / DC3000).